Here is a 272-residue protein sequence, read N- to C-terminus: Energy-coupling factor transporter ATP-binding protein EcfA1 (272 aa).

The ABC transporter domain maps to 2-237; that stretch reads IKVSDVCFSY…KNIIEKAKID (236 aa). Residue 37 to 44 participates in ATP binding; it reads GHNGSGKS.

This sequence belongs to the ABC transporter superfamily. Energy-coupling factor EcfA family. In terms of assembly, forms a stable energy-coupling factor (ECF) transporter complex composed of 2 membrane-embedded substrate-binding proteins (S component), 2 ATP-binding proteins (A component) and 2 transmembrane proteins (T component).

It localises to the cell membrane. Functionally, ATP-binding (A) component of a common energy-coupling factor (ECF) ABC-transporter complex. Unlike classic ABC transporters this ECF transporter provides the energy necessary to transport a number of different substrates. In Mesomycoplasma hyopneumoniae (strain 7448) (Mycoplasma hyopneumoniae), this protein is Energy-coupling factor transporter ATP-binding protein EcfA1.